The primary structure comprises 272 residues: MGYVVSTFYRFVHLSNYYDIRPVLKEFCVQNNIKGTIILAEQGINATIAGSQNSLDKFFSFLDLDSRLCNLQYHKSFSRCNPFSKMKVKLRKELVCLGIEDFDDSVGGEYIDPENWDNFISRSDVYTIDTRNSYEINFGKFKNSINPETNCFRDFPDWAISWAKNKIDDDPIIAMYCTGGIRCEKSTAFMKDLGFSKVYHLKGGILEYFKSTGNINNLWEGYCFTFDDRIIVDDKLVPGDVKCILCGAHVMLEDMKSISRGHVLCFSCKDHV.

In terms of domain architecture, Rhodanese spans 121-217 (SRSDVYTIDT…YFKSTGNINN (97 aa)). The Cysteine persulfide intermediate role is filled by Cys177.

The protein belongs to the TrhO family.

It catalyses the reaction uridine(34) in tRNA + AH2 + O2 = 5-hydroxyuridine(34) in tRNA + A + H2O. Catalyzes oxygen-dependent 5-hydroxyuridine (ho5U) modification at position 34 in tRNAs. The sequence is that of tRNA uridine(34) hydroxylase from Ehrlichia ruminantium (strain Welgevonden).